A 373-amino-acid polypeptide reads, in one-letter code: MAGWSCLVTGAGGFVGQRIIKMLVQEKELQEVRALDKVFRPETKEEFSKLQTKTKVTVLEGDILDAQCLRRACQGISVVIHTAAVIDVTGVIPRQTILDVNLKGTQNLLEACVQASVPAFIFCSSVDVAGPNSYKKIVLNGHEEQNHESTWSDPYPYSKKMAEKAVLAANGSMLKNGGTLNTCALRPMYIYGERSPFIFNAIIRALKNKGILCVTGKFSIANPVYVENVAWAHILAARGLRDPKKSTSIQGQFYYISDDTPHQSYDDLNYTLSKEWGLRPNASWSLPLPLLYWLAFLLETVSFLLRPVYRYRPLFNRHLITLSNSTFTFSYKKAQRDLGYEPLVNWEEAKQKTSEWIGTIVEQHREILDTKCQ.

NADP(+)-binding positions include 10-15 (GAGGFV), Tyr-155, and Lys-159. Lys-159 acts as the Proton donor in catalysis. A helical membrane pass occupies residues 288–308 (LPLLYWLAFLLETVSFLLRPV).

Belongs to the 3-beta-HSD family. As to expression, steroidogenic tissues (includes testes, ovaries and adrenal glands).

The protein localises to the endoplasmic reticulum membrane. It is found in the mitochondrion membrane. It carries out the reaction a 3beta-hydroxy-Delta(5)-steroid + NAD(+) = a 3-oxo-Delta(5)-steroid + NADH + H(+). The enzyme catalyses pregnenolone + NAD(+) = pregn-5-ene-3,20-dione + NADH + H(+). It catalyses the reaction 3beta-hydroxyandrost-5-en-17-one + NAD(+) = androst-5-ene-3,17-dione + NADH + H(+). The catalysed reaction is androst-5-en-3beta,17beta-diol + NAD(+) = 17beta-hydroxy-androst-5-en-3-one + NADH + H(+). It carries out the reaction a 3beta-hydroxysteroid + NADP(+) = a 3-oxosteroid + NADPH + H(+). The enzyme catalyses 5alpha-androstane-3beta,17beta-diol + NADP(+) = 17beta-hydroxy-5alpha-androstan-3-one + NADPH + H(+). It catalyses the reaction 3beta-hydroxy-5alpha-androstan-17-one + NADP(+) = 5alpha-androstan-3,17-dione + NADPH + H(+). The catalysed reaction is a 3-oxo-Delta(5)-steroid = a 3-oxo-Delta(4)-steroid. It carries out the reaction pregn-5-ene-3,20-dione = progesterone. The enzyme catalyses androst-5-ene-3,17-dione = androst-4-ene-3,17-dione. It catalyses the reaction 17beta-hydroxy-androst-5-en-3-one = testosterone. The catalysed reaction is 5alpha-androstane-3beta,17beta-diol + NAD(+) = 17beta-hydroxy-5alpha-androstan-3-one + NADH + H(+). It participates in steroid hormone biosynthesis. It functions in the pathway steroid metabolism. In terms of biological role, a bifunctional enzyme responsible for the oxidation and isomerization of 3beta-hydroxy-Delta(5)-steroid precursors to 3-oxo-Delta(4)-steroids, an essential step in steroid hormone biosynthesis. Specifically catalyzes the conversion of pregnenolone to progesterone, 17alpha-hydroxypregnenolone to 17alpha-hydroxyprogesterone, dehydroepiandrosterone (DHEA) to 4-androstenedione, and androstenediol to testosterone. Additionally, catalyzes the interconversion between 3beta-hydroxy and 3-oxo-5alpha-androstane steroids controlling the bioavalability of the active forms. Specifically converts dihydrotestosterone to its inactive form 5alpha-androstanediol, that does not bind androgen receptor/AR. Also converts androstanedione, a precursor of testosterone and estrone, to epiandrosterone. Expected to use NAD(+) as preferred electron donor for the 3-beta-hydroxy-steroid dehydrogenase activity and NADPH for the 3-ketosteroid reductase activity. The sequence is that of 3 beta-hydroxysteroid dehydrogenase/Delta 5--&gt;4-isomerase type 1 from Mus musculus (Mouse).